The chain runs to 411 residues: Serine hydroxymethyltransferase (411 aa).

Residues L113 and 117-119 (GHL) contribute to the (6S)-5,6,7,8-tetrahydrofolate site. At K222 the chain carries N6-(pyridoxal phosphate)lysine. Residue 346-348 (SPF) participates in (6S)-5,6,7,8-tetrahydrofolate binding.

Belongs to the SHMT family. As to quaternary structure, homodimer. Pyridoxal 5'-phosphate serves as cofactor.

Its subcellular location is the cytoplasm. It carries out the reaction (6R)-5,10-methylene-5,6,7,8-tetrahydrofolate + glycine + H2O = (6S)-5,6,7,8-tetrahydrofolate + L-serine. The protein operates within one-carbon metabolism; tetrahydrofolate interconversion. It functions in the pathway amino-acid biosynthesis; glycine biosynthesis; glycine from L-serine: step 1/1. Its function is as follows. Catalyzes the reversible interconversion of serine and glycine with tetrahydrofolate (THF) serving as the one-carbon carrier. This reaction serves as the major source of one-carbon groups required for the biosynthesis of purines, thymidylate, methionine, and other important biomolecules. Also exhibits THF-independent aldolase activity toward beta-hydroxyamino acids, producing glycine and aldehydes, via a retro-aldol mechanism. The polypeptide is Serine hydroxymethyltransferase (Prochlorococcus marinus (strain NATL2A)).